The sequence spans 544 residues: MSAKDVKFGDSARSKMIAGVNVLADAVKVTLGPKGRNVVIDRSFGAPHITKDGVTVAKEISLKDKFENMGAQLVREVSSKTNDIAGDGTTTATVLAQAILNEGIKSVTAGMNPMDLKRGIDIAVKTVVENIRSIAKPADDFKAIEQVGSISANSDTTVGKLIAQAMEKVGKEGVITVEEGSGFEDALDVVEGMQFDRGYISPYFANKQDTLTAELENPFILLVDKKISNIRELISVLEAVAKTGKPLLIIAEDVEGEALATLVVNNMRGIIKVCAVKAPGFGDRRKAMLQDIAILTGATVISEEVGMSLEQATLQDLGTAHKITVSKENTVIVDGAGDAAAIAERVQQIRAQIEESTSEYDREKLQERVAKLAGGVAVIKIGAATEVEMKEKKDRVDDALHATRAAVEEGVVAGGGVALVRAVNALEGLKGANEDQTAGINILRRAIEAPLRQIVANAGDEPSVVINAVKNGEGNFGYNAATGEYGDMLEMGILDPAKVTRSALEHAASVAGLMLTTECMITDIPEDKPAAPDMGGMGGMGGMM.

Residues 30–33 (TLGP), Lys51, 87–91 (DGTTT), Gly415, 479–481 (NAA), and Asp495 each bind ATP.

The protein belongs to the chaperonin (HSP60) family. In terms of assembly, forms a cylinder of 14 subunits composed of two heptameric rings stacked back-to-back. Interacts with the co-chaperonin GroES.

It localises to the cytoplasm. The enzyme catalyses ATP + H2O + a folded polypeptide = ADP + phosphate + an unfolded polypeptide.. Functionally, together with its co-chaperonin GroES, plays an essential role in assisting protein folding. The GroEL-GroES system forms a nano-cage that allows encapsulation of the non-native substrate proteins and provides a physical environment optimized to promote and accelerate protein folding. The polypeptide is Chaperonin GroEL (Acinetobacter baumannii (strain AB307-0294)).